The following is a 419-amino-acid chain: Transcription termination factor Rho (419 aa).

Residues 48–123 (DIFGDGVLEI…LKVNEVNFDK (76 aa)) form the Rho RNA-BD domain. 3 RNA-binding regions span residues 61–66 (GFGFLR), 78–80 (DIY), and 108–110 (ERY). ATP is bound by residues 169–174 (GRGQRG), 181–186 (KAGKTM), and Arg212. The segment at 284-288 (VLTGG) is RNA-binding 2.

The protein belongs to the Rho family. Homohexamer. The homohexamer assembles into an open ring structure.

Functionally, facilitates transcription termination by a mechanism that involves Rho binding to the nascent RNA, activation of Rho's RNA-dependent ATPase activity, and release of the mRNA from the DNA template. In Escherichia coli O157:H7, this protein is Transcription termination factor Rho.